The sequence spans 385 residues: 8-amino-7-oxononanoate synthase (385 aa).

Residue Arg21 participates in substrate binding. 108–109 (GF) provides a ligand contact to pyridoxal 5'-phosphate. His133 contacts substrate. Positions 179, 207, and 233 each coordinate pyridoxal 5'-phosphate. Position 236 is an N6-(pyridoxal phosphate)lysine (Lys236). A substrate-binding site is contributed by Thr352.

Belongs to the class-II pyridoxal-phosphate-dependent aminotransferase family. BioF subfamily. As to quaternary structure, homodimer. It depends on pyridoxal 5'-phosphate as a cofactor.

It catalyses the reaction 6-carboxyhexanoyl-[ACP] + L-alanine + H(+) = (8S)-8-amino-7-oxononanoate + holo-[ACP] + CO2. The protein operates within cofactor biosynthesis; biotin biosynthesis. Catalyzes the decarboxylative condensation of pimeloyl-[acyl-carrier protein] and L-alanine to produce 8-amino-7-oxononanoate (AON), [acyl-carrier protein], and carbon dioxide. The sequence is that of 8-amino-7-oxononanoate synthase from Salmonella typhimurium (strain LT2 / SGSC1412 / ATCC 700720).